Consider the following 828-residue polypeptide: Periplasmic nitrate reductase (828 aa).

The tat-type signal signal peptide spans M1–A31. Residues I39–D95 form the 4Fe-4S Mo/W bis-MGD-type domain. [4Fe-4S] cluster contacts are provided by C46, C49, C53, and C81. Mo-bis(molybdopterin guanine dinucleotide)-binding positions include K83, Q150, N175, C179, W212 to M219, S243 to H247, Q262 to D264, M372, Q376, N482, S508 to D509, K531, D558, and T718 to T727. F794 lines the substrate pocket. Positions 802 and 819 each coordinate Mo-bis(molybdopterin guanine dinucleotide).

The protein belongs to the prokaryotic molybdopterin-containing oxidoreductase family. NasA/NapA/NarB subfamily. As to quaternary structure, component of the periplasmic nitrate reductase NapAB complex composed of NapA and NapB. The cofactor is [4Fe-4S] cluster. Mo-bis(molybdopterin guanine dinucleotide) serves as cofactor. Predicted to be exported by the Tat system. The position of the signal peptide cleavage has not been experimentally proven.

The protein localises to the periplasm. The enzyme catalyses 2 Fe(II)-[cytochrome] + nitrate + 2 H(+) = 2 Fe(III)-[cytochrome] + nitrite + H2O. Functionally, catalytic subunit of the periplasmic nitrate reductase complex NapAB. Receives electrons from NapB and catalyzes the reduction of nitrate to nitrite. In Escherichia coli O81 (strain ED1a), this protein is Periplasmic nitrate reductase.